A 153-amino-acid chain; its full sequence is Histone H2B.8 (153 aa).

2 stretches are compositionally biased toward basic and acidic residues: residues 1–28 and 36–53; these read MAPK…EKAP and EKRL…EGKK. The disordered stretch occupies residues 1–61; that stretch reads MAPKAEKKPA…KKAGRKKAKK (61 aa). Lysine 7 and lysine 37 each carry N6-acetyllysine. Lysine 149 is covalently cross-linked (Glycyl lysine isopeptide (Lys-Gly) (interchain with G-Cter in ubiquitin)).

It belongs to the histone H2B family. The nucleosome is a histone octamer containing two molecules each of H2A, H2B, H3 and H4 assembled in one H3-H4 heterotetramer and two H2A-H2B heterodimers. The octamer wraps approximately 147 bp of DNA. In terms of processing, can be acetylated to form H2BK6ac and H2BK33ac. Monoubiquitinated by BRE1 to form H2BK143ub1 and deubiquitinated by UBP26. Required for heterochromatic histone H3 di- and trimethylation at H3K4me. May give a specific tag for epigenetic transcriptional activation.

The protein localises to the nucleus. It localises to the chromosome. Core component of nucleosome. Nucleosomes wrap and compact DNA into chromatin, limiting DNA accessibility to the cellular machineries which require DNA as a template. Histones thereby play a central role in transcription regulation, DNA repair, DNA replication and chromosomal stability. DNA accessibility is regulated via a complex set of post-translational modifications of histones, also called histone code, and nucleosome remodeling. The polypeptide is Histone H2B.8 (H2B.8) (Oryza sativa subsp. indica (Rice)).